A 120-amino-acid chain; its full sequence is uncharacterized protein (120 aa).

The HIT domain maps to 7–120 (VFAKIITKNL…KLIGLINNND (114 aa)). Positions 101–105 (HFHFH) match the Histidine triad motif motif.

This is an uncharacterized protein from Rickettsia prowazekii (strain Madrid E).